The sequence spans 489 residues: Mitochondrial-processing peptidase subunit beta (489 aa).

The transit peptide at 1–45 (MAAAALSRTLLPEARRRLWGFTRRLPLRRAAAQPLYFGGDRLRST) directs the protein to the mitochondrion. His101 lines the Zn(2+) pocket. Glu104 acts as the Proton acceptor in catalysis. Residues His105 and Glu181 each coordinate Zn(2+).

It belongs to the peptidase M16 family. Heterodimer of PMPCA (alpha) and PMPCB (beta) subunits, forming the mitochondrial processing protease (MPP) in which PMPCA is involved in substrate recognition and binding and PMPCB is the catalytic subunit. Zn(2+) is required as a cofactor.

It localises to the mitochondrion matrix. The catalysed reaction is Release of N-terminal transit peptides from precursor proteins imported into the mitochondrion, typically with Arg in position P2.. With respect to regulation, binding to PMPCA is required for catalytic activity. Functionally, catalytic subunit of the essential mitochondrial processing protease (MPP), which cleaves the mitochondrial sequence off newly imported precursors proteins. Preferentially, cleaves after an arginine at position P2. Required for PINK1 turnover by coupling PINK1 mitochondrial import and cleavage, which results in subsequent PINK1 proteolysis. This chain is Mitochondrial-processing peptidase subunit beta (Pmpcb), found in Mus musculus (Mouse).